The following is a 596-amino-acid chain: Aspartate--tRNA(Asp/Asn) ligase (596 aa).

Glu-175 contacts L-aspartate. The tract at residues 199–202 (QMFK) is aspartate. Residues Arg-221 and His-451 each coordinate L-aspartate. Position 221 to 223 (221 to 223 (RDE)) interacts with ATP. Glu-485 lines the ATP pocket. Position 492 (Arg-492) interacts with L-aspartate. 537-540 (GVDR) provides a ligand contact to ATP.

The protein belongs to the class-II aminoacyl-tRNA synthetase family. Type 1 subfamily. As to quaternary structure, homodimer.

It is found in the cytoplasm. The catalysed reaction is tRNA(Asx) + L-aspartate + ATP = L-aspartyl-tRNA(Asx) + AMP + diphosphate. Functionally, aspartyl-tRNA synthetase with relaxed tRNA specificity since it is able to aspartylate not only its cognate tRNA(Asp) but also tRNA(Asn). Reaction proceeds in two steps: L-aspartate is first activated by ATP to form Asp-AMP and then transferred to the acceptor end of tRNA(Asp/Asn). The chain is Aspartate--tRNA(Asp/Asn) ligase from Zymomonas mobilis subsp. mobilis (strain ATCC 31821 / ZM4 / CP4).